The sequence spans 214 residues: Adenylate kinase (214 aa).

An ATP-binding site is contributed by 10–15 (GAGKGT). The tract at residues 30–59 (STGDMLRAAIKAGTELGKQAKAVIDAGQLV) is NMP. AMP contacts are provided by residues Thr31, Arg36, 57–59 (QLV), 85–88 (GFPR), and Gln92. The interval 122–159 (GRRAHLPSGRTYHVVYNPPKVEGKDDVTGEDLVVRDDD) is LID. ATP contacts are provided by residues Arg123 and 132-133 (TY). The AMP site is built by Arg156 and Arg167. Lys200 provides a ligand contact to ATP.

It belongs to the adenylate kinase family. In terms of assembly, monomer.

Its subcellular location is the cytoplasm. The catalysed reaction is AMP + ATP = 2 ADP. Its pathway is purine metabolism; AMP biosynthesis via salvage pathway; AMP from ADP: step 1/1. Catalyzes the reversible transfer of the terminal phosphate group between ATP and AMP. Plays an important role in cellular energy homeostasis and in adenine nucleotide metabolism. In Vibrio parahaemolyticus serotype O3:K6 (strain RIMD 2210633), this protein is Adenylate kinase.